A 294-amino-acid chain; its full sequence is MPSTPTLIFIVIFFLVSVASMLQNGFMIIVLGREWMRNRALPAVDMIVASLASSRFCLHGIAILNNFLASFDFCYQANFVGILWDFINTLILWLTAWLAIFYCVKISSFSHPVLFWLKWRISQLVPRLLLVSLIMGGLSAIISATGNIIANQMIISQGFHGNCTFGHMSLDFYRYYYLSHAVLMWFTPFFLFLVSIIFLMFSLYRHVEKMRGHRPGPWDPRTQAHTMALKSLTVFITFYILFFLALIISSTKSKTMHSYWYWVREIIIYTGIFLNSIILVLSNPKLRKALKMRF.

Residues 1 to 7 are Extracellular-facing; the sequence is MPSTPTL. A helical transmembrane segment spans residues 8–28; the sequence is IFIVIFFLVSVASMLQNGFMI. Residues 29–43 are Cytoplasmic-facing; that stretch reads IVLGREWMRNRALPA. Residues 44–64 form a helical membrane-spanning segment; it reads VDMIVASLASSRFCLHGIAIL. Topologically, residues 65–80 are extracellular; that stretch reads NNFLASFDFCYQANFV. Residues 81-101 traverse the membrane as a helical segment; it reads GILWDFINTLILWLTAWLAIF. Residues 102–128 lie on the Cytoplasmic side of the membrane; sequence YCVKISSFSHPVLFWLKWRISQLVPRL. A helical transmembrane segment spans residues 129-149; that stretch reads LLVSLIMGGLSAIISATGNII. At 150 to 180 the chain is on the extracellular side; the sequence is ANQMIISQGFHGNCTFGHMSLDFYRYYYLSH. An N-linked (GlcNAc...) asparagine glycan is attached at Asn162. The chain crosses the membrane as a helical span at residues 181 to 201; sequence AVLMWFTPFFLFLVSIIFLMF. The Cytoplasmic segment spans residues 202-227; that stretch reads SLYRHVEKMRGHRPGPWDPRTQAHTM. Residues 228-248 traverse the membrane as a helical segment; sequence ALKSLTVFITFYILFFLALII. Residues 249-260 lie on the Extracellular side of the membrane; that stretch reads SSTKSKTMHSYW. Residues 261–281 traverse the membrane as a helical segment; that stretch reads YWVREIIIYTGIFLNSIILVL. Residues 282 to 294 lie on the Cytoplasmic side of the membrane; that stretch reads SNPKLRKALKMRF.

The protein belongs to the G-protein coupled receptor T2R family.

The protein localises to the membrane. Putative taste receptor which may play a role in the perception of bitterness. The polypeptide is Taste receptor type 2 member 143 (Rattus norvegicus (Rat)).